We begin with the raw amino-acid sequence, 58 residues long: Large ribosomal subunit protein eL37 (58 aa).

Positions 20, 23, 35, and 38 each coordinate Zn(2+). The segment at C20 to C38 adopts a C4-type zinc-finger fold. The disordered stretch occupies residues G39–N58.

Belongs to the eukaryotic ribosomal protein eL37 family. Zn(2+) serves as cofactor.

Functionally, binds to the 23S rRNA. The protein is Large ribosomal subunit protein eL37 of Halorubrum lacusprofundi (strain ATCC 49239 / DSM 5036 / JCM 8891 / ACAM 34).